A 968-amino-acid chain; its full sequence is Alanine--tRNA ligase, cytoplasmic (968 aa).

Residue M1 is modified to N-acetylmethionine. S3 is modified (phosphoserine). K19 is modified (N6-acetyllysine). Residues R77, H95, W176, and 214–216 (IWN) each bind ATP. 2 residues coordinate L-alanine: N216 and D239. Residue G243 participates in ATP binding. 2 positions are modified to phosphoserine: S399 and S555. Residues H605, H609, C723, and H727 each coordinate Zn(2+). The Nuclear localization signal signature appears at 750-763 (RRIVAVTGAEAQKA). Position 876 is an N6-acetyllysine (K876). An N6,N6,N6-trimethyllysine; alternate modification is found at K943. K943 carries the post-translational modification N6,N6-dimethyllysine; alternate. K943 carries the post-translational modification N6-methyllysine; alternate.

This sequence belongs to the class-II aminoacyl-tRNA synthetase family. As to quaternary structure, monomer. Interacts with ANKRD16; the interaction is direct. Zn(2+) is required as a cofactor. ISGylated. In terms of processing, methylation at 'Lys-943' by METTL21C.

The protein localises to the cytoplasm. The protein resides in the nucleus. It catalyses the reaction tRNA(Ala) + L-alanine + ATP = L-alanyl-tRNA(Ala) + AMP + diphosphate. It carries out the reaction (S)-lactate + ATP + H(+) = (S)-lactoyl-AMP + diphosphate. The catalysed reaction is (S)-lactoyl-AMP + L-lysyl-[protein] = N(6)-[(S)-lactoyl]-L-lysyl-[protein] + AMP + 2 H(+). With respect to regulation, the protein lactyltransferase activity is inhibited by beta-alanine. Catalyzes the attachment of alanine to tRNA(Ala) in a two-step reaction: alanine is first activated by ATP to form Ala-AMP and then transferred to the acceptor end of tRNA(Ala). Also edits incorrectly charged tRNA(Ala) via its editing domain. In presence of high levels of lactate, also acts as a protein lactyltransferase that mediates lactylation of lysine residues in target proteins, such as TEAD1, TP53/p53 and YAP1. Protein lactylation takes place in a two-step reaction: lactate is first activated by ATP to form lactate-AMP and then transferred to lysine residues of target proteins. Acts as an inhibitor of TP53/p53 activity by catalyzing lactylation of TP53/p53. Acts as a positive regulator of the Hippo pathway by mediating lactylation of TEAD1 and YAP1. In Rattus norvegicus (Rat), this protein is Alanine--tRNA ligase, cytoplasmic (Aars1).